The primary structure comprises 723 residues: Methionine--tRNA ligase (723 aa).

Positions 12-22 match the 'HIGH' region motif; sequence PYANGDIHLGH. The Zn(2+) site is built by C143, C146, C156, and C159. The 'KMSKS' region motif lies at 345-349; it reads KMSKS. K348 contacts ATP. The interval 568-604 is disordered; that stretch reads PAAATAPAKDAKPAKEAGSQQRHAEKQQHAAGVSETA. Residues 612–723 form the tRNA-binding domain; that stretch reads DFTKVDLRIA…EGAQAGMRVK (112 aa).

The protein belongs to the class-I aminoacyl-tRNA synthetase family. MetG type 1 subfamily. As to quaternary structure, homodimer. The cofactor is Zn(2+).

It localises to the cytoplasm. It catalyses the reaction tRNA(Met) + L-methionine + ATP = L-methionyl-tRNA(Met) + AMP + diphosphate. Is required not only for elongation of protein synthesis but also for the initiation of all mRNA translation through initiator tRNA(fMet) aminoacylation. This is Methionine--tRNA ligase from Azoarcus sp. (strain BH72).